We begin with the raw amino-acid sequence, 163 residues long: MRALYPGSFDPLTNGHMDLIERAAVLFGDVIVAVLGNPSKKPAFSVEERIRQIRSSTAHLQGVEVVSFDGLTVNCAKEHSADLILRGLRAMSDFEYELQLAHTNRSLDDTLETVFMATSTQHSFLSSSVVKEVARFGGAIDHMVPKEVALDLNRLFNSAFLPH.

S8 lines the substrate pocket. ATP-binding positions include 8–9 (SF) and H16. The substrate site is built by K40, T72, and R86. ATP-binding positions include 87 to 89 (GLR), E97, and 122 to 128 (HSFLSSS).

Belongs to the bacterial CoaD family. Homohexamer. Mg(2+) serves as cofactor.

Its subcellular location is the cytoplasm. It carries out the reaction (R)-4'-phosphopantetheine + ATP + H(+) = 3'-dephospho-CoA + diphosphate. Its pathway is cofactor biosynthesis; coenzyme A biosynthesis; CoA from (R)-pantothenate: step 4/5. In terms of biological role, reversibly transfers an adenylyl group from ATP to 4'-phosphopantetheine, yielding dephospho-CoA (dPCoA) and pyrophosphate. This Synechococcus sp. (strain CC9902) protein is Phosphopantetheine adenylyltransferase.